The following is a 200-amino-acid chain: Holliday junction resolvase RecU (200 aa).

A disordered region spans residues 1-25 (MTIRYPNGKRYNQASQPQKTPIKTH). Residues 10–25 (RYNQASQPQKTPIKTH) show a composition bias toward polar residues. 4 residues coordinate Mg(2+): Thr-85, Asp-87, Glu-100, and Gln-119.

The protein belongs to the RecU family. The cofactor is Mg(2+).

It localises to the cytoplasm. The catalysed reaction is Endonucleolytic cleavage at a junction such as a reciprocal single-stranded crossover between two homologous DNA duplexes (Holliday junction).. Functionally, endonuclease that resolves Holliday junction intermediates in genetic recombination. Cleaves mobile four-strand junctions by introducing symmetrical nicks in paired strands. Promotes annealing of linear ssDNA with homologous dsDNA. Required for DNA repair, homologous recombination and chromosome segregation. The chain is Holliday junction resolvase RecU from Bacillus cereus (strain G9842).